We begin with the raw amino-acid sequence, 195 residues long: GTP-dependent dephospho-CoA kinase (195 aa).

Residues Asp-49, Val-50, Asp-68, Glu-127, and Asp-150 each coordinate GTP.

The protein belongs to the GTP-dependent DPCK family.

The catalysed reaction is 3'-dephospho-CoA + GTP = GDP + CoA + H(+). It functions in the pathway cofactor biosynthesis; coenzyme A biosynthesis. Catalyzes the GTP-dependent phosphorylation of the 3'-hydroxyl group of dephosphocoenzyme A to form coenzyme A (CoA). This chain is GTP-dependent dephospho-CoA kinase, found in Methanosarcina acetivorans (strain ATCC 35395 / DSM 2834 / JCM 12185 / C2A).